The primary structure comprises 153 residues: Arginine repressor (153 aa).

Belongs to the ArgR family.

Its subcellular location is the cytoplasm. It participates in amino-acid biosynthesis; L-arginine biosynthesis [regulation]. Functionally, regulates arginine biosynthesis genes. This Actinobacillus pleuropneumoniae serotype 7 (strain AP76) protein is Arginine repressor.